A 263-amino-acid chain; its full sequence is Acetylglutamate kinase (263 aa).

Residues 49–50 (GG), Arg-71, and Asn-163 each bind substrate.

Belongs to the acetylglutamate kinase family. ArgB subfamily.

It localises to the cytoplasm. The catalysed reaction is N-acetyl-L-glutamate + ATP = N-acetyl-L-glutamyl 5-phosphate + ADP. It functions in the pathway amino-acid biosynthesis; L-arginine biosynthesis; N(2)-acetyl-L-ornithine from L-glutamate: step 2/4. Functionally, catalyzes the ATP-dependent phosphorylation of N-acetyl-L-glutamate. This is Acetylglutamate kinase from Moritella abyssi.